A 2336-amino-acid chain; its full sequence is Voltage-dependent N-type calcium channel subunit alpha-1B (2336 aa).

Positions 1–37 are disordered; the sequence is MVRFGDELGGRYGGTGGGERARGGGAGGAGGPGQGGL. Over 1 to 90 the chain is Cytoplasmic; it reads MVRFGDELGG…DNVVRKYAKR (90 aa). Gly residues predominate over residues 10-37; it reads GRYGGTGGGERARGGGAGGAGGPGQGGL. An Omega-N-methylarginine modification is found at arginine 22. Residues 82–359 form an I repeat; it reads NVVRKYAKRI…LVLGVLSGEF (278 aa). Residues 91-114 traverse the membrane as a helical segment; it reads ITEWPPFEYMILATIIANCIVLAL. Topologically, residues 115 to 131 are extracellular; that stretch reads EQHLPDGDKTPMSERLD. Residues 132–152 form a helical membrane-spanning segment; sequence DTEPYFIGIFCFEAGIKIIAL. The Cytoplasmic segment spans residues 153–163; that stretch reads GFVFHKGSYLR. A helical membrane pass occupies residues 164–182; the sequence is NGWNVMDFVVVLTEILATA. At 183 to 187 the chain is on the extracellular side; sequence GTDFD. Residues 188–211 traverse the membrane as a helical segment; the sequence is LRTLRAVRVLRPLKLVSGIPSLQV. Residues 212 to 221 are Cytoplasmic-facing; the sequence is VLKSIMKAMV. A helical membrane pass occupies residues 222–244; sequence PLLQIGLLLFFAILMFAIIGLEF. The Extracellular segment spans residues 245–331; sequence YMGKFHKACF…NTNDAAGNTW (87 aa). An N-linked (GlcNAc...) asparagine glycan is attached at asparagine 256. A helical transmembrane segment spans residues 332–356; it reads NWLYFIPLIIIGSFFMLNLVLGVLS. Residues 357 to 483 lie on the Cytoplasmic side of the membrane; the sequence is GEFAKERERV…FLIRRMVKAQ (127 aa). The interval 379–396 is binding to the beta subunit; sequence QQIERELNGYLEWIFKAE. Serine 411 is subject to Phosphoserine. 452–459 lines the ATP pocket; sequence ASLKSGKT. The II repeat unit spans residues 469 to 713; the sequence is EKMFRFLIRR…VFLAIAVDNL (245 aa). The helical transmembrane segment at 484–502 threads the bilayer; that stretch reads SFYWVVLCVVALNTLCVAM. Residues 503–512 are Extracellular-facing; it reads VHYNQPQRLT. A helical transmembrane segment spans residues 513 to 535; it reads TALYFAEFVFLGLFLTEMSLKMY. At 536–545 the chain is on the cytoplasmic side; the sequence is GLGPRSYFRS. Serine 545 is an a 1,2-diacyl-sn-glycero-3-phospho-(1D-myo-inositol-4,5-bisphosphate) binding site. A helical membrane pass occupies residues 546–567; sequence SFNCFDFGVIVGSIFEVVWAAI. Over 568 to 574 the chain is Extracellular; sequence KPGTSFG. A helical membrane pass occupies residues 575–587; it reads ISVLRALRLLRIF. Arginine 585 and lysine 588 together coordinate a 1,2-diacyl-sn-glycero-3-phospho-(1D-myo-inositol-4,5-bisphosphate). Residues 588–605 are Cytoplasmic-facing; it reads KVTKYWNSLRNLVVSLLN. Residues 606–631 traverse the membrane as a helical segment; sequence SMKSIISLLFLLFLFIVVFALLGMQL. The Extracellular portion of the chain corresponds to 632–683; sequence FGGQFNFQDETPTTNFDTFPAAILTVFQILTGEDWNAVMYHGIESQGGVSKG. Residues 684–710 traverse the membrane as a helical segment; it reads MFSSFYFIVLTLFGNYTLLNVFLAIAV. The Cytoplasmic portion of the chain corresponds to 711–1149; sequence DNLANAQELT…FCHYIVTMRY (439 aa). Phosphoserine is present on residues serine 746, serine 749, and serine 784. Disordered regions lie at residues 800 to 1021 and 1051 to 1076; these read YAST…HQPK and EQPE…STTV. 6 stretches are compositionally biased toward basic and acidic residues: residues 806–827, 870–891, 920–930, 938–948, 970–981, and 996–1021; these read VRPD…RDGL, EQDR…EERA, GSPEEATEREP, HAQDSSKEGKE, GPRETENSEEPT, and PPER…HQPK. Positions 1059–1076 are enriched in polar residues; the sequence is QRNVTRMGSQPSDPSTTV. A Phosphoserine modification is found at serine 1067. The III repeat unit spans residues 1135-1421; that stretch reads NLLRRFCHYI…IFVALIIITF (287 aa). A helical membrane pass occupies residues 1150–1168; it reads FEMVILVVIALSSIALAAE. Over 1169–1176 the chain is Extracellular; it reads DPVRTDSF. The chain crosses the membrane as a helical span at residues 1177–1201; it reads RNNALKYMDYIFTGVFTFEMVIKMI. At 1202-1215 the chain is on the cytoplasmic side; sequence DLGLLLHPGAYFRD. A helical membrane pass occupies residues 1216 to 1240; the sequence is LWNILDFIVVSGALVAFAFSSFMGG. Topologically, residues 1241–1246 are extracellular; that stretch reads SKGKDI. A helical membrane pass occupies residues 1247–1267; the sequence is NTIKSLRVLRVLRPLKTIKRL. At 1268–1285 the chain is on the cytoplasmic side; the sequence is PKLKAVFDCVVNSLKNVL. A helical membrane pass occupies residues 1286-1305; sequence NILIVYMLFMFIFAVIAVQL. At 1306–1392 the chain is on the extracellular side; it reads FKGKFFYCTD…EQGPSPGFRM (87 aa). The helical transmembrane segment at 1393 to 1418 threads the bilayer; that stretch reads ELSIFYVVYFVVFPFFFVNIFVALII. At 1419-1473 the chain is on the cytoplasmic side; sequence ITFQEQGDKVMSECSLEKNERACIDFAISAKPLTRYMPQNKQSFQYKTWTFVVSP. An IV repeat occupies 1458 to 1711; that stretch reads NKQSFQYKTW…LFVAVIMDNF (254 aa). The helical transmembrane segment at 1474–1492 threads the bilayer; the sequence is PFEYFIMAMIALNTVVLMM. Over 1493–1500 the chain is Extracellular; it reads KFYDAPYE. A helical transmembrane segment spans residues 1501 to 1525; the sequence is YELMLKCLNIVFTSMFSLECILKII. The Cytoplasmic portion of the chain corresponds to 1526-1535; it reads AFGVLNYFRD. A helical transmembrane segment spans residues 1536–1557; the sequence is AWNVFDFVTVLGSITDILVTEI. The Extracellular portion of the chain corresponds to 1558-1563; it reads ANNFIN. Residue asparagine 1563 is glycosylated (N-linked (GlcNAc...) asparagine). The helical transmembrane segment at 1564–1582 threads the bilayer; the sequence is LSFLRLFRAARLIKLCRQG. Residues 1583–1601 lie on the Cytoplasmic side of the membrane; it reads YTIRILLWTFVQSFKALPY. The chain crosses the membrane as a helical span at residues 1602–1621; the sequence is VCLLIAMLFFIYAIIGMQVF. Over 1622–1683 the chain is Extracellular; that stretch reads GNIALDDGTS…ANASECGSDF (62 aa). The N-linked (GlcNAc...) asparagine glycan is linked to asparagine 1675. The helical transmembrane segment at 1684 to 1707 threads the bilayer; it reads AYFYFVSFIFLCSFLMLNLFVAVI. Residues 1708-2336 are Cytoplasmic-facing; the sequence is MDNFEYLTRD…YHHPDQDHWC (629 aa). Residues 1724–1759 form the EF-hand domain; the sequence is HHLDEFIRVWAEYDPAACGRISYNDMFEMLKHMSPP. 3 residues coordinate Ca(2+): aspartate 1737, arginine 1743, and aspartate 1748. A disordered region spans residues 1981-2202; that stretch reads TLRGPDGEPQ…TPRPSITYKT (222 aa). Residues 2048–2062 are compositionally biased toward basic residues; that stretch reads SHHHHHRCHRRRDKK. Serine 2065 is modified (phosphoserine). The span at 2097–2113 shows a compositional bias: basic and acidic residues; it reads CRRERKQERGRSQERRQ. Over residues 2161–2177 the composition is skewed to polar residues; it reads GSGSVNGSPLMSTSGAS. Phosphoserine occurs at positions 2221, 2230, and 2253.

It belongs to the calcium channel alpha-1 subunit (TC 1.A.1.11) family. CACNA1B subfamily. In terms of assembly, multisubunit complex consisting of alpha-1, alpha-2, beta and delta subunits in a 1:1:1:1 ratio. The channel activity is directed by the pore-forming and voltage-sensitive alpha-1 subunit. In many cases, this subunit is sufficient to generate voltage-sensitive calcium channel activity. The auxiliary subunits beta and alpha-2/delta linked by a disulfide bridge regulate the channel activity. Interacts with RIMS1. Interacts with FMR1 (via C-terminus); this interaction induces a decrease in the number of presynaptic functional CACNA1B channels at the cell surface. Post-translationally, phosphorylated in vitro by CaM-kinase II, PKA, PKC and CGPK. As to expression, central nervous system.

It is found in the membrane. It catalyses the reaction Ca(2+)(in) = Ca(2+)(out). Its activity is regulated as follows. Is specifically blocked by omega-conotoxin GVIA. Is specifically blocked by omega-conotoxin MVIIA (ziconotide). Is insensitive to dihydropyridines (DHP). Its function is as follows. Voltage-sensitive calcium channels (VSCC) mediate the entry of calcium ions into excitable cells and are also involved in a variety of calcium-dependent processes, including muscle contraction, hormone or neurotransmitter release, gene expression, cell motility, cell division and cell death. This alpha-1B subunit gives rise to N-type calcium currents. N-type calcium channels belong to the 'high-voltage activated' (HVA) group. They are involved in pain signaling. Calcium channels containing alpha-1B subunit may play a role in directed migration of immature neurons. Mediates Ca(2+) release probability at hippocampal neuronal soma and synaptic terminals. The sequence is that of Voltage-dependent N-type calcium channel subunit alpha-1B (Cacna1b) from Rattus norvegicus (Rat).